Reading from the N-terminus, the 283-residue chain is ATP phosphoribosyltransferase (283 aa).

Belongs to the ATP phosphoribosyltransferase family. Long subfamily. Mg(2+) is required as a cofactor.

The protein localises to the cytoplasm. The enzyme catalyses 1-(5-phospho-beta-D-ribosyl)-ATP + diphosphate = 5-phospho-alpha-D-ribose 1-diphosphate + ATP. It participates in amino-acid biosynthesis; L-histidine biosynthesis; L-histidine from 5-phospho-alpha-D-ribose 1-diphosphate: step 1/9. Feedback inhibited by histidine. Its function is as follows. Catalyzes the condensation of ATP and 5-phosphoribose 1-diphosphate to form N'-(5'-phosphoribosyl)-ATP (PR-ATP). Has a crucial role in the pathway because the rate of histidine biosynthesis seems to be controlled primarily by regulation of HisG enzymatic activity. This Azobacteroides pseudotrichonymphae genomovar. CFP2 protein is ATP phosphoribosyltransferase.